A 380-amino-acid polypeptide reads, in one-letter code: Aminomethyltransferase (380 aa).

It belongs to the GcvT family. In terms of assembly, the glycine cleavage system is composed of four proteins: P, T, L and H.

The catalysed reaction is N(6)-[(R)-S(8)-aminomethyldihydrolipoyl]-L-lysyl-[protein] + (6S)-5,6,7,8-tetrahydrofolate = N(6)-[(R)-dihydrolipoyl]-L-lysyl-[protein] + (6R)-5,10-methylene-5,6,7,8-tetrahydrofolate + NH4(+). The glycine cleavage system catalyzes the degradation of glycine. In Koribacter versatilis (strain Ellin345), this protein is Aminomethyltransferase.